The chain runs to 300 residues: Delta(7)-sterol 5(6)-desaturase erg31 (300 aa).

The next 3 helical transmembrane spans lie at 33–53 (ISLF…FASL), 78–98 (VLTA…WFLA), and 117–137 (YFLC…YWAH). Residues 123-248 (PLFVMFSDFG…FTTLFDRLGN (126 aa)) enclose the Fatty acid hydroxylase domain. A Histidine box-1 motif is present at residues 137 to 141 (HRFLH). The short motif at 150–154 (HKLHH) is the Histidine box-2 element. A helical transmembrane segment spans residues 180–200 (HLFPFFFPLHKLTYLALFTFV). The short motif at 225–229 (HNGHH) is the Histidine box-3 element.

Belongs to the sterol desaturase family. It depends on Fe cation as a cofactor.

It is found in the endoplasmic reticulum membrane. The catalysed reaction is episterol + 2 Fe(II)-[cytochrome b5] + O2 + 2 H(+) = 5-dehydroepisterol + 2 Fe(III)-[cytochrome b5] + 2 H2O. The protein operates within steroid metabolism; ergosterol biosynthesis. In terms of biological role, C-5 sterol desaturase; part of the third module of ergosterol biosynthesis pathway that includes by the late steps of the pathway. Erg31 and erg32 catalyze the introduction of a C-5 double bond in the B ring to produce 5-dehydroepisterol. The third module or late pathway involves the ergosterol synthesis itself through consecutive reactions that mainly occur in the endoplasmic reticulum (ER) membrane. Firstly, the squalene synthase erg9 catalyzes the condensation of 2 farnesyl pyrophosphate moieties to form squalene, which is the precursor of all steroids. Secondly, squalene is converted into lanosterol by the consecutive action of the squalene epoxidase erg1 and the lanosterol synthase erg7. The lanosterol 14-alpha-demethylase erg11/cyp1 catalyzes C14-demethylation of lanosterol to produce 4,4'-dimethyl cholesta-8,14,24-triene-3-beta-ol. In the next steps, a complex process involving various demethylation, reduction and desaturation reactions catalyzed by the C-14 reductase erg24 and the C-4 demethylation complex erg25-erg26-erg27 leads to the production of zymosterol. Erg28 likely functions in the C-4 demethylation complex reaction by tethering erg26 and Erg27 to the endoplasmic reticulum or to facilitate interaction between these proteins. Then, the sterol 24-C-methyltransferase erg6 catalyzes the methyl transfer from S-adenosyl-methionine to the C-24 of zymosterol to form fecosterol. The C-8 sterol isomerase erg2 catalyzes the reaction which results in unsaturation at C-7 in the B ring of sterols and thus converts fecosterol to episterol. The sterol-C5-desaturases erg31 and erg32 then catalyze the introduction of a C-5 double bond in the B ring to produce 5-dehydroepisterol. The C-22 sterol desaturase erg5 further converts 5-dehydroepisterol into ergosta-5,7,22,24(28)-tetraen-3beta-ol by forming the C-22(23) double bond in the sterol side chain. Finally, ergosta-5,7,22,24(28)-tetraen-3beta-ol is substrate of the C-24(28) sterol reductase erg4 to produce ergosterol. In the genus Schizosaccharomyces, a second route exists between lanosterol and fecosterol, via the methylation of lanosterol to eburicol by erg6, followed by C14-demethylation by erg11/cyp1 and C4-demethylation by the demethylation complex erg25-erg26-erg27. The sequence is that of Delta(7)-sterol 5(6)-desaturase erg31 from Schizosaccharomyces pombe (strain 972 / ATCC 24843) (Fission yeast).